Consider the following 418-residue polypeptide: Lactate dehydrogenase (NAD(+),ferredoxin) subunit LctC (418 aa).

Residues Arg285, 325 to 328 (IGLS), 343 to 348 (SGAVQF), Asn362, and 380 to 381 (DL) contribute to the FAD site.

It belongs to the ETF alpha-subunit/FixB family. In terms of assembly, part of the stable heterotrimeric lactate dehydrogenase-Etf complex, which is formed by the lactate dehydrogenase LctD and the electron-transferring flavoprotein (Etf) alpha (LctC) and beta (LctB) subunits. FAD serves as cofactor. [4Fe-4S] cluster is required as a cofactor.

It is found in the cytoplasm. It carries out the reaction lactate + 2 reduced [2Fe-2S]-[ferredoxin] + 2 NAD(+) = 2 oxidized [2Fe-2S]-[ferredoxin] + pyruvate + 2 NADH. Its activity is regulated as follows. Activity is stimulated by divalent cations. Highest stimulation is observed with Ca(2+). Its function is as follows. The lactate dehydrogenase-Etf complex catalyzes the oxidation of lactate to pyruvate. It uses flavin-based electron confurcation to drive endergonic lactate oxidation with NAD(+) as oxidant at the expense of simultaneous exergonic electron flow from reduced ferredoxin to NAD(+). The electron transfer flavoprotein (Etf) mediates the electron transfer between the different donors and acceptors. The chain is Lactate dehydrogenase (NAD(+),ferredoxin) subunit LctC from Acetobacterium woodii (strain ATCC 29683 / DSM 1030 / JCM 2381 / KCTC 1655 / WB1).